A 329-amino-acid polypeptide reads, in one-letter code: DNA-directed RNA polymerase subunit alpha (329 aa).

Residues 1-235 (MQGFVEDFLK…QQLEAFVDLR (235 aa)) are alpha N-terminal domain (alpha-NTD). The segment at 249 to 329 (FEPVLLRPVD…NWPPKSLLED (81 aa)) is alpha C-terminal domain (alpha-CTD).

It belongs to the RNA polymerase alpha chain family. As to quaternary structure, homodimer. The RNAP catalytic core consists of 2 alpha, 1 beta, 1 beta' and 1 omega subunit. When a sigma factor is associated with the core the holoenzyme is formed, which can initiate transcription.

The enzyme catalyses RNA(n) + a ribonucleoside 5'-triphosphate = RNA(n+1) + diphosphate. Functionally, DNA-dependent RNA polymerase catalyzes the transcription of DNA into RNA using the four ribonucleoside triphosphates as substrates. The chain is DNA-directed RNA polymerase subunit alpha from Buchnera aphidicola subsp. Cinara cedri (strain Cc).